Reading from the N-terminus, the 486-residue chain is Aromatic-L-amino-acid decarboxylase (486 aa).

At Met-1 the chain carries N-acetylmethionine. 2 tandem repeats follow at residues 58 to 115 and 118 to 178. The interval 58 to 178 is 2 X approximate tandem repeats; that stretch reads QDVEKIIMPG…AASPGLTQGA (121 aa). Thr-82 provides a ligand contact to substrate. 2 residues coordinate pyridoxal 5'-phosphate: Ala-148 and Ser-149. His-192 contributes to the substrate binding site. Thr-246 and Asn-300 together coordinate pyridoxal 5'-phosphate. Position 303 is an N6-(pyridoxal phosphate)lysine (Lys-303).

Belongs to the group II decarboxylase family. In terms of assembly, homodimer. Pyridoxal 5'-phosphate serves as cofactor.

The enzyme catalyses L-dopa + H(+) = dopamine + CO2. The catalysed reaction is 5-hydroxy-L-tryptophan + H(+) = serotonin + CO2. The protein operates within catecholamine biosynthesis; dopamine biosynthesis; dopamine from L-tyrosine: step 2/2. In terms of biological role, catalyzes the decarboxylation of L-3,4-dihydroxyphenylalanine (DOPA) to dopamine and L-5-hydroxytryptophan to serotonin. The sequence is that of Aromatic-L-amino-acid decarboxylase (DDC) from Sus scrofa (Pig).